A 289-amino-acid polypeptide reads, in one-letter code: ATP synthase gamma chain (289 aa).

It belongs to the ATPase gamma chain family. As to quaternary structure, F-type ATPases have 2 components, CF(1) - the catalytic core - and CF(0) - the membrane proton channel. CF(1) has five subunits: alpha(3), beta(3), gamma(1), delta(1), epsilon(1). CF(0) has three main subunits: a, b and c.

Its subcellular location is the cell inner membrane. In terms of biological role, produces ATP from ADP in the presence of a proton gradient across the membrane. The gamma chain is believed to be important in regulating ATPase activity and the flow of protons through the CF(0) complex. This chain is ATP synthase gamma chain, found in Halorhodospira halophila (strain DSM 244 / SL1) (Ectothiorhodospira halophila (strain DSM 244 / SL1)).